Consider the following 278-residue polypeptide: Probable CCR4-associated factor 1 homolog 5 (278 aa).

A divalent metal cation contacts are provided by aspartate 30, glutamate 32, aspartate 145, and aspartate 217.

Belongs to the CAF1 family. Component of the CCR4-NOT complex, at least composed of CRR4 and CAF1 proteins. A divalent metal cation serves as cofactor.

It is found in the nucleus. The protein localises to the cytoplasm. It catalyses the reaction Exonucleolytic cleavage of poly(A) to 5'-AMP.. Functionally, ubiquitous transcription factor required for a diverse set of processes. It is a component of the CCR4 complex involved in the control of gene expression. This is Probable CCR4-associated factor 1 homolog 5 (CAF1-5) from Arabidopsis thaliana (Mouse-ear cress).